A 504-amino-acid polypeptide reads, in one-letter code: Maturase K (504 aa).

This sequence belongs to the intron maturase 2 family. MatK subfamily.

The protein localises to the plastid. Its subcellular location is the chloroplast. Its function is as follows. Usually encoded in the trnK tRNA gene intron. Probably assists in splicing its own and other chloroplast group II introns. This is Maturase K from Fagus crenata (Japanese beech).